A 300-amino-acid chain; its full sequence is Protoheme IX farnesyltransferase (300 aa).

9 helical membrane-spanning segments follow: residues 24–44, 48–68, 94–114, 118–138, 146–166, 172–192, 217–237, 239–259, and 278–298; these read VTQL…PGMV, VLLG…AINC, LQIL…LYTF, LTIW…TLLL, IVIG…AVTG, AWIL…VLAL, LHIL…FISG, SGAV…AYAW, and IVYL…RPVI.

This sequence belongs to the UbiA prenyltransferase family. Protoheme IX farnesyltransferase subfamily.

The protein localises to the cell inner membrane. It carries out the reaction heme b + (2E,6E)-farnesyl diphosphate + H2O = Fe(II)-heme o + diphosphate. It participates in porphyrin-containing compound metabolism; heme O biosynthesis; heme O from protoheme: step 1/1. In terms of biological role, converts heme B (protoheme IX) to heme O by substitution of the vinyl group on carbon 2 of heme B porphyrin ring with a hydroxyethyl farnesyl side group. The chain is Protoheme IX farnesyltransferase from Burkholderia mallei (strain NCTC 10247).